The primary structure comprises 269 residues: 4-hydroxy-tetrahydrodipicolinate reductase (269 aa).

NAD(+) contacts are provided by residues 12–17 (GGSGRM), 102–104 (GTT), and 126–129 (SPNM). His159 serves as the catalytic Proton donor/acceptor. (S)-2,3,4,5-tetrahydrodipicolinate is bound at residue His160. Lys163 (proton donor) is an active-site residue. 169-170 (GT) is a binding site for (S)-2,3,4,5-tetrahydrodipicolinate.

The protein belongs to the DapB family.

It is found in the cytoplasm. The catalysed reaction is (S)-2,3,4,5-tetrahydrodipicolinate + NAD(+) + H2O = (2S,4S)-4-hydroxy-2,3,4,5-tetrahydrodipicolinate + NADH + H(+). The enzyme catalyses (S)-2,3,4,5-tetrahydrodipicolinate + NADP(+) + H2O = (2S,4S)-4-hydroxy-2,3,4,5-tetrahydrodipicolinate + NADPH + H(+). It functions in the pathway amino-acid biosynthesis; L-lysine biosynthesis via DAP pathway; (S)-tetrahydrodipicolinate from L-aspartate: step 4/4. Catalyzes the conversion of 4-hydroxy-tetrahydrodipicolinate (HTPA) to tetrahydrodipicolinate. This chain is 4-hydroxy-tetrahydrodipicolinate reductase, found in Leptospira borgpetersenii serovar Hardjo-bovis (strain JB197).